Reading from the N-terminus, the 3491-residue chain is Genome polyprotein (3491 aa).

Residues 183–277 (KYNTALVQVY…RISITFRNQI (95 aa)) enclose the Fe2OG dioxygenase domain. Positions 201, 203, and 259 each coordinate Fe cation. A 2-oxoglutarate-binding site is contributed by R268. The tract at residues 559 to 588 (DSASDNDVETMKKSEKRRKRRKRNPPPVRQ) is disordered. The segment covering 572-582 (SEKRRKRRKRN) has biased composition (basic residues). The 157-residue stretch at 589–745 (VITRAPVSNI…DCLADDYLQY (157 aa)) folds into the Peptidase S30 domain. Active-site for P1 proteinase activity residues include H640, D651, and S692. The Peptidase C6 domain occupies 948-1070 (VHVPLEGLCF…RNGCQEYRVG (123 aa)). Catalysis depends on for helper component proteinase activity residues C956 and H1029. Residues 1540–1692 (TLTSSVKREF…TMHPVEVVNM (153 aa)) form the Helicase ATP-binding domain. Residue 1553 to 1560 (GFVGSGKS) coordinates ATP. The DEAH box signature appears at 1642–1645 (DESH). The Helicase C-terminal domain maps to 1696-1869 (SFEDFAIGQR…NVPPIFDNVD (174 aa)). Y2238 is subject to O-(5'-phospho-RNA)-tyrosine. The region spanning 2354–2570 (GRSTIKSGNN…LDVGSNNAIR (217 aa)) is the Peptidase C4 domain. Residues H2400, D2435, and C2504 each act as for nuclear inclusion protein A activity in the active site. The RdRp catalytic domain maps to 2850 to 2974 (FVYGTGDGSQ…AIHPDRESIL (125 aa)). Disordered stretches follow at residues 3200–3279 (MPQA…RKGL) and 3471–3491 (RHTTEDATARTHNLRGAAMMA). The span at 3236-3248 (RLSPERIVRHDDD) shows a compositional bias: basic and acidic residues. Phosphothreonine is present on T3473.

It belongs to the potyviridae genome polyprotein family. Requires Fe(2+) as cofactor. Post-translationally, VPg is uridylylated by the polymerase and is covalently attached to the 5'-end of the genomic RNA. This uridylylated form acts as a nucleotide-peptide primer for the polymerase. Genome polyprotein of potyviruses undergoes post-translational proteolytic processing by the main proteinase NIa-pro resulting in the production of at least ten individual proteins. The P1 proteinase and the HC-pro cleave only their respective C-termini autocatalytically. 6K1 is essential for proper proteolytic separation of P3 from CI.

It localises to the host cytoplasmic vesicle. The protein resides in the virion. It carries out the reaction RNA(n) + a ribonucleoside 5'-triphosphate = RNA(n+1) + diphosphate. The enzyme catalyses Hydrolyzes glutaminyl bonds, and activity is further restricted by preferences for the amino acids in P6 - P1' that vary with the species of potyvirus, e.g. Glu-Xaa-Xaa-Tyr-Xaa-Gln-|-(Ser or Gly) for the enzyme from tobacco etch virus. The natural substrate is the viral polyprotein, but other proteins and oligopeptides containing the appropriate consensus sequence are also cleaved.. The catalysed reaction is Hydrolyzes a Gly-|-Gly bond at its own C-terminus, commonly in the sequence -Tyr-Xaa-Val-Gly-|-Gly, in the processing of the potyviral polyprotein.. Its function is as follows. Required for aphid transmission and also has proteolytic activity. Only cleaves a Gly-Gly dipeptide at its own C-terminus. Interacts with virions and aphid stylets. Acts as a suppressor of RNA-mediated gene silencing, also known as post-transcriptional gene silencing (PTGS), a mechanism of plant viral defense that limits the accumulation of viral RNAs. May have RNA-binding activity. In terms of biological role, has helicase activity. It may be involved in replication. Indispensable for virus replication. Reduces the abundance of host transcripts related to jasmonic acid biosynthesis therefore altering the host defenses. In order to increase its own stability, decreases host protein degradation pathways. Functionally, indispensable for virus replication. Its function is as follows. Mediates the cap-independent, EIF4E-dependent translation of viral genomic RNAs. Binds to the cap-binding site of host EIF4E and thus interferes with the host EIF4E-dependent mRNA export and translation. VPg-RNA directly binds EIF4E and is a template for transcription. Also forms trimeric complexes with EIF4E-EIF4G, which are templates for translation. In terms of biological role, has RNA-binding and proteolytic activities. An RNA-dependent RNA polymerase that plays an essential role in the virus replication. Functionally, involved in aphid transmission, cell-to-cell and systemis movement, encapsidation of the viral RNA and in the regulation of viral RNA amplification. This chain is Genome polyprotein, found in Blackberry virus Y (isolate Blackberry plant/USA:Arkansas/C3ARK/2005) (BVY).